The chain runs to 674 residues: MEAAAPEIERCDAGDVESDHDGAAAAAERVPPWREQVTARGMVAALLIGFVYTVIIMKLALTTGIIPTLNVSAALLAFLALRGWTRAPALLLPGGGAASSSSRRRPFTRQENTVVQTCAVACYTMGFGGGFGSSLLALNRKTYELAGVSTPGNSPGSYKEPGVGWMTGFLFAISFVGLLNLLPLRKALIIDYKLTYPSGTATAVLINGFHTPQGENSAKKQVRGFLNCFGISLLWSFFQWFYTGGESCGFLQFPTFGLKAWKQTFYFDFSLTYVGAGMICSHLVNLSALFGAILSWGIMWPLISIQKGKWYPGNVPESSMTSLFGYKSFMCVALIMGDGLYHFIKVTGITAKSLHERSNRRHAKKATDEDTFVIADMQRDEFFNKDYIPNWLAYAGYALLSIVAVIAIPIMFQQVKWYYVVVAFVLAPVLGFSNAYGTGLTDMNMSYNYGKIALFIFAAWGGRDNGVIAGLVGCGIVKQLVQVSADLMHDFKTGHLTLTSPRSMLVGQAIGTAMGCIIAPLTFLLFYKAFDIGNPDGYWKAPYALIFRNMAILGVEGFSALPKHCLELSAGFFAFSVLINLMRDFLPRKYRDYVPLPTAMAVPFLVGANFAIDMCVGSLIVFAWHKINSKESALLVPAVASGFICGDGIWMFPSSLLSLAKVKPPICMKFTPGS.

A disordered region spans residues 1 to 29 (MEAAAPEIERCDAGDVESDHDGAAAAAER). Residues 7-22 (EIERCDAGDVESDHDG) show a composition bias toward basic and acidic residues. Transmembrane regions (helical) follow at residues 41-61 (GMVA…KLAL), 64-84 (GIIP…LRGW), 118-138 (CAVA…LLAL), 162-182 (GVGW…LNLL), 224-244 (GFLN…FYTG), 283-303 (LVNL…WPLI), 329-349 (FMCV…VTGI), 392-412 (LAYA…PIMF), 420-440 (VVVA…GTGL), 452-472 (IALF…AGLV), 506-526 (VGQA…FLLF), 559-579 (SALP…SVLI), 604-624 (FLVG…VFAW), and 633-653 (ALLV…WMFP).

Belongs to the YSL (TC 2.A.67.2) family. In terms of tissue distribution, expressed in phloem cells of vascular bundles in leaves and leaf sheaths. Expressed at low levels in phloem companion cells in the central cylinder of roots, but not in the epidermal or cortical cells.

It localises to the cell membrane. Involved in the phloem transport of iron and manganese and their translocation into the grain. Transports iron- and manganese-nicotianamine chelates, but not iron-phytosiderophore. This chain is Metal-nicotianamine transporter YSL2 (YSL2), found in Oryza sativa subsp. japonica (Rice).